The primary structure comprises 425 residues: Type I restriction enzyme MjaVII specificity subunit (425 aa).

Residues 9 to 168 (KKTEIGEIPE…KSFKIPLPPL (160 aa)) form a target recognition domain 1 region. Residues 169 to 208 (EEQKQIAKILTKIDEGIEIIEKSINKLERIKKGLMHKLLT) form a central conserved region (CCR) region. Positions 169 to 208 (EEQKQIAKILTKIDEGIEIIEKSINKLERIKKGLMHKLLT) form a coiled coil. Positions 209 to 368 (KGIGHSRFKK…TFKELSKSML (160 aa)) are target recognition domain 2. The stretch at 369 to 418 (ENFKIPLPPLEEQKQIAKILSSVDKSIELKKQKKEKLQRMKKKIMELLLT) forms a coiled coil. The segment at 369–418 (ENFKIPLPPLEEQKQIAKILSSVDKSIELKKQKKEKLQRMKKKIMELLLT) is distal conserved region (DCR).

The protein belongs to the type-I restriction system S methylase family. As to quaternary structure, the type I restriction/modification system is composed of three polypeptides R, M and S.

Its function is as follows. The specificity (S) subunit of a type I restriction enzyme; this subunit dictates DNA sequence specificity. The M and S subunits together form a methyltransferase (MTase) that methylates A-3 on the top and bottom strands of the sequence 5'-CAAN(7)TGG-3'. In the presence of the R subunit the complex can also act as an endonuclease, binding to the same target sequence but cutting the DNA some distance from this site. Whether the DNA is cut or modified depends on the methylation state of the target sequence. When the target site is unmodified, the DNA is cut. When the target site is hemimethylated, the complex acts as a maintenance MTase modifying the DNA so that both strands become methylated. After locating a non-methylated recognition site, the enzyme complex serves as a molecular motor that translocates DNA in an ATP-dependent manner until a collision occurs that triggers cleavage. This Methanocaldococcus jannaschii (strain ATCC 43067 / DSM 2661 / JAL-1 / JCM 10045 / NBRC 100440) (Methanococcus jannaschii) protein is Type I restriction enzyme MjaVII specificity subunit.